The following is a 255-amino-acid chain: Type III pantothenate kinase (255 aa).

6–13 provides a ligand contact to ATP; sequence DIGNTNIK. 107–110 contacts substrate; sequence GADR. The active-site Proton acceptor is D109. ATP is bound at residue T132. Position 184 (T184) interacts with substrate.

Belongs to the type III pantothenate kinase family. Homodimer. NH4(+) is required as a cofactor. K(+) serves as cofactor.

The protein localises to the cytoplasm. It catalyses the reaction (R)-pantothenate + ATP = (R)-4'-phosphopantothenate + ADP + H(+). It participates in cofactor biosynthesis; coenzyme A biosynthesis; CoA from (R)-pantothenate: step 1/5. In terms of biological role, catalyzes the phosphorylation of pantothenate (Pan), the first step in CoA biosynthesis. The protein is Type III pantothenate kinase of Roseiflexus castenholzii (strain DSM 13941 / HLO8).